A 257-amino-acid chain; its full sequence is Deoxyribose-phosphate aldolase (257 aa).

Asp102 serves as the catalytic Proton donor/acceptor. The active-site Schiff-base intermediate with acetaldehyde is the Lys166. Catalysis depends on Lys198, which acts as the Proton donor/acceptor.

Belongs to the DeoC/FbaB aldolase family. DeoC type 2 subfamily.

Its subcellular location is the cytoplasm. The catalysed reaction is 2-deoxy-D-ribose 5-phosphate = D-glyceraldehyde 3-phosphate + acetaldehyde. It participates in carbohydrate degradation; 2-deoxy-D-ribose 1-phosphate degradation; D-glyceraldehyde 3-phosphate and acetaldehyde from 2-deoxy-alpha-D-ribose 1-phosphate: step 2/2. Its function is as follows. Catalyzes a reversible aldol reaction between acetaldehyde and D-glyceraldehyde 3-phosphate to generate 2-deoxy-D-ribose 5-phosphate. This Shewanella frigidimarina (strain NCIMB 400) protein is Deoxyribose-phosphate aldolase.